The sequence spans 200 residues: MLKEIRPALVMLVALTALTGLVYPLAMTGVAQLLLPAQANGSLIEQNGQVIGSALIGQAFTDARYFHGRPSATTAPDPQDSSKTVPSPYNAANSMGANLGPTSAALKERLTADVDAAKQDNPTSPVPVDLVTSSASGLDPDISPEAALFQVPRVAKARGIDEAKLRALIDSQIQGRELGLLGEPRVNVLKLNLALDRMAA.

The chain crosses the membrane as a helical span at residues 9 to 31 (LVMLVALTALTGLVYPLAMTGVA). The interval 68-97 (GRPSATTAPDPQDSSKTVPSPYNAANSMGA) is disordered. Positions 71–96 (SATTAPDPQDSSKTVPSPYNAANSMG) are enriched in polar residues.

It belongs to the KdpC family. As to quaternary structure, the system is composed of three essential subunits: KdpA, KdpB and KdpC.

The protein resides in the cell inner membrane. Part of the high-affinity ATP-driven potassium transport (or Kdp) system, which catalyzes the hydrolysis of ATP coupled with the electrogenic transport of potassium into the cytoplasm. This subunit acts as a catalytic chaperone that increases the ATP-binding affinity of the ATP-hydrolyzing subunit KdpB by the formation of a transient KdpB/KdpC/ATP ternary complex. The chain is Potassium-transporting ATPase KdpC subunit from Rhodopseudomonas palustris (strain BisA53).